We begin with the raw amino-acid sequence, 146 residues long: Hemoglobin subunit beta (146 aa).

Valine 1 bears the N-acetylvaline mark. Positions histidine 2–histidine 146 constitute a Globin domain. A Phosphothreonine modification is found at threonine 12. Serine 44 is modified (phosphoserine). Histidine 63 provides a ligand contact to heme b. The residue at position 82 (lysine 82) is an N6-acetyllysine. Histidine 92 lines the heme b pocket. Cysteine 93 bears the S-nitrosocysteine mark. The residue at position 144 (lysine 144) is an N6-acetyllysine.

Belongs to the globin family. In terms of assembly, heterotetramer of two alpha chains and two beta chains. Red blood cells.

In terms of biological role, involved in oxygen transport from the lung to the various peripheral tissues. This chain is Hemoglobin subunit beta (HBB), found in Tursiops truncatus (Atlantic bottle-nosed dolphin).